Consider the following 177-residue polypeptide: Large ribosomal subunit protein uL5 (177 aa).

Belongs to the universal ribosomal protein uL5 family. Part of the 50S ribosomal subunit; part of the 5S rRNA/L5/L18/L25 subcomplex. Contacts the 5S rRNA and the P site tRNA. Forms a bridge to the 30S subunit in the 70S ribosome.

Functionally, this is one of the proteins that bind and probably mediate the attachment of the 5S RNA into the large ribosomal subunit, where it forms part of the central protuberance. In the 70S ribosome it contacts protein S13 of the 30S subunit (bridge B1b), connecting the 2 subunits; this bridge is implicated in subunit movement. Contacts the P site tRNA; the 5S rRNA and some of its associated proteins might help stabilize positioning of ribosome-bound tRNAs. The protein is Large ribosomal subunit protein uL5 of Wolbachia sp. subsp. Brugia malayi (strain TRS).